We begin with the raw amino-acid sequence, 239 residues long: Increased recombination centers protein 22-2 (239 aa).

A signal peptide spans 1 to 19 (MKLSTIFTAFAATIATVAG). Residues 20–161 (YETTGSKQTV…AAVSFFDPRL (142 aa)) are Lumenal-facing. Residues 162–182 (IFLELVLLITFAGLIYVGYEI) traverse the membrane as a helical segment. Residues 183–239 (WGKQYFKGVAPVKAKKVSAAKASSPVATGPSTTSATGYDTNWIPESHLKQKKTKKVN) are Cytoplasmic-facing. The interval 202–222 (AKASSPVATGPSTTSATGYDT) is disordered. Over residues 211–221 (GPSTTSATGYD) the composition is skewed to polar residues.

It belongs to the IRC22 family.

The protein resides in the endoplasmic reticulum membrane. Functionally, is probably involved in a pathway contributing to genomic integrity. The protein is Increased recombination centers protein 22-2 (IRC22-2) of Candida albicans (strain SC5314 / ATCC MYA-2876) (Yeast).